We begin with the raw amino-acid sequence, 156 residues long: Snaclec jerdonibitin subunit alpha (156 aa).

The first 23 residues, 1–23 (MGRFIFVSFGLLVVFLSLSGTGA), serve as a signal peptide directing secretion. 3 disulfides stabilise this stretch: C25–C36, C53–C150, and C125–C142. Residues 32 to 151 (FRQYCYRVFK…CGQQHLFMCK (120 aa)) form the C-type lectin domain.

It belongs to the snaclec family. In terms of assembly, heterodimer of subunits alpha and beta; disulfide-linked. Expressed by the venom gland.

The protein localises to the secreted. In terms of biological role, snaclec that dose-dependently inhibits platelet aggregation induced by ristocetin or low-dose thrombin, but not by high-dose thrombin. Binds to GPIbalpha (GP1BA). In vivo, also dose-dependently induces thrombocytopenia of mice and platelet counts remains at very low level even after 18 hours intravenous injection. The sequence is that of Snaclec jerdonibitin subunit alpha from Protobothrops jerdonii (Jerdon's pitviper).